A 974-amino-acid chain; its full sequence is RING finger protein nhl-1 (974 aa).

A disordered region spans residues 1–29; the sequence is MSSSPQNEAEAREKMRELMSRPPSSRPAD. Residues 9 to 19 are compositionally biased toward basic and acidic residues; it reads AEAREKMRELM. The RING-type zinc-finger motif lies at 43-84; that stretch reads CPICLDRYKQPKLLPCQHTFCYPCLESCADTLHRNLKCPECR. 2 disordered regions span residues 360–395 and 416–548; these read VKSD…IRYR and SLLT…DFPV. Residues 416–431 show a composition bias toward polar residues; the sequence is SLLTTSVTADSSSRTS. Positions 437–446 are enriched in basic and acidic residues; that stretch reads RVTRSVEPTK. Residues 447–465 show a composition bias toward polar residues; it reads SRPTSLIVPNTETPRTVSP. The span at 488-501 shows a compositional bias: pro residues; that stretch reads APLPQLPIRKPPLP. Over residues 511 to 528 the composition is skewed to basic and acidic residues; the sequence is LNEKVETIRRAHQQRQDA. Over residues 529-538 the composition is skewed to low complexity; the sequence is SRAASRAVSS. NHL repeat units follow at residues 699–742, 746–788, 792–835, 839–883, 887–930, and 934–974; these read RAVF…FDKD, VRQF…FGLE, LFSF…FDKN, IAKF…FDPH, LFSF…FDAQ, and VSSF…IQIF.

As to quaternary structure, interacts with ubc-13.

This is RING finger protein nhl-1 from Caenorhabditis elegans.